The primary structure comprises 48 residues: Large ribosomal subunit protein bL32 (48 aa).

Positions 1–20 are enriched in basic residues; the sequence is MAVPKRRVSKTRAAKRRTHY. A disordered region spans residues 1–48; that stretch reads MAVPKRRVSKTRAAKRRTHYKVSLPIPVKDKDGSWKLPHRINTKTGEY.

Belongs to the bacterial ribosomal protein bL32 family.

This Campylobacter hominis (strain ATCC BAA-381 / DSM 21671 / CCUG 45161 / LMG 19568 / NCTC 13146 / CH001A) protein is Large ribosomal subunit protein bL32.